The following is a 470-amino-acid chain: Ras-like GTPase HI_1637 (470 aa).

Residues 27–34 (GLSRSGKT) carry the Walker A motif motif. S29, G32, K33, T34, A35, W98, S101, T102, R103, K342, D344, and H345 together coordinate GTP. The GDP site is built by G32, K33, T34, A35, W98, S101, and T102. K342, D344, H345, A383, and V384 together coordinate GDP. V384 serves as a coordination point for GTP.

To E.coli YcjX. In terms of assembly, monomer in solution. Requires Mg(2+) as cofactor.

It catalyses the reaction GTP + H2O = GDP + phosphate + H(+). With respect to regulation, alternates between an inactive form bound to GDP and an active form bound to GTP. Likely activated by a guanine nucleotide-exchange factor (GEF). In terms of biological role, binds GTP and GDP. Has intrinsic GTPase activity. Does not hydrolyze ATP. May act as a transducer of stress responses. The polypeptide is Ras-like GTPase HI_1637 (Haemophilus influenzae (strain ATCC 51907 / DSM 11121 / KW20 / Rd)).